Reading from the N-terminus, the 364-residue chain is Caffeic acid 3-O-methyltransferase (364 aa).

Residue 131-137 (MNQDKVL) coordinates substrate. Residues 163-181 (AFEYHGTDSRFNRVFNEGM) are substrate binding. S-adenosyl-L-methionine is bound by residues Gly209, Asp232, Asp252, Met253, and Lys266. The active-site Proton acceptor is the His270.

It belongs to the class I-like SAM-binding methyltransferase superfamily. Cation-independent O-methyltransferase family. COMT subfamily. Homodimer. In terms of tissue distribution, confined to the vascular tissues of organs undergoing lignification such as stems and roots.

The enzyme catalyses (E)-caffeate + S-adenosyl-L-methionine = (E)-ferulate + S-adenosyl-L-homocysteine + H(+). It carries out the reaction tricetin + 2 S-adenosyl-L-methionine = 3',5'-di-O-methyltricetin + 2 S-adenosyl-L-homocysteine + 2 H(+). The catalysed reaction is luteolin + S-adenosyl-L-methionine = chrysoeriol + S-adenosyl-L-homocysteine + H(+). It catalyses the reaction tricetin + S-adenosyl-L-methionine = 3'-O-methyltricetin + S-adenosyl-L-homocysteine + H(+). Its pathway is aromatic compound metabolism; phenylpropanoid biosynthesis. Its function is as follows. Catalyzes the conversion of caffeic acid to ferulic acid and of 5-hydroxyferulic acid to sinapic acid. The resulting products may subsequently be converted to the corresponding alcohols that are incorporated into lignins. Can use the flavone tricetin (5,7,3',4',5'-pentahydroxyflavone) as the preferred substrate and give rise to its 3',5'-dimethyl derivative, tricin (3',5'-dimethoxy-5,7,4'-trihydroxyflavone), as the major product, and selgin to a lower extent. Tricin exhibits potential benefits for human health including relaxant effect on smooth muscle of intestinal tissues, antioxidant effect, antihistaminic activity, and growth inhibition of human malignant breast tumor cells and colon cancer cells. Can also use luteolin, quercetin and 5-hydroxyferulic acid (5HF) as substrates. The protein is Caffeic acid 3-O-methyltransferase of Zea mays (Maize).